Here is a 58-residue protein sequence, read N- to C-terminus: uncharacterized protein (58 aa).

Disordered regions lie at residues 1–20 and 38–58; these read MKKN…MNKK and IIET…KKQQ.

This is an uncharacterized protein from Bacillus subtilis (strain 168).